Reading from the N-terminus, the 90-residue chain is UPF0298 protein SSU05_1549 (90 aa).

The protein belongs to the UPF0298 family.

The protein localises to the cytoplasm. In Streptococcus suis (strain 05ZYH33), this protein is UPF0298 protein SSU05_1549.